An 840-amino-acid polypeptide reads, in one-letter code: 9-beta-pimara-7,15-diene synthase, chloroplastic (840 aa).

The N-terminal 56 residues, 1-56, are a transit peptide targeting the chloroplast; sequence MASPMEAVARSSLVLAPRRRRALGLLPAAAAPFVLDCRRRHNGGMRRPHVSFACSA. Positions 589, 593, 733, 737, and 741 each coordinate Mg(2+). The DDXXD motif signature appears at 589-593; that stretch reads DDFFD.

It belongs to the terpene synthase family. Mg(2+) is required as a cofactor.

Its subcellular location is the plastid. It localises to the chloroplast. It carries out the reaction 9alpha-copalyl diphosphate = 9beta-pimara-7,15-diene + diphosphate. Functionally, involved in the biosynthesis of momilactone A and B phytoalexins. Catalyzes the conversion of syn-copalyl diphosphate to the phytoalexin precursor syn-pimara-7,15-diene. This chain is 9-beta-pimara-7,15-diene synthase, chloroplastic, found in Oryza sativa subsp. indica (Rice).